Here is a 179-residue protein sequence, read N- to C-terminus: ADP-ribosylation factor 1-like 1 (179 aa).

Gly2 is lipidated: N-myristoyl glycine. The tract at residues 3–16 (LFFSKISSFMFPNI) is important for the stable binding to the membranes. Residues 24-32 (GLDGAGKTT), 126-129 (NKQD), and Ala160 each bind GTP.

Belongs to the small GTPase superfamily. Arf family.

The protein localises to the golgi apparatus membrane. It catalyses the reaction GTP + H2O = GDP + phosphate + H(+). Alternates between an inactive GDP-bound form and an active GTP-bound form. Activated by a guanine nucleotide-exchange factor (GEF) and inactivated by GTPase-activating protein (GAP). In terms of biological role, small GTPase involved in protein trafficking between different compartments. Modulates vesicle budding and uncoating within the Golgi complex. In its GTP-bound form, triggers the recruitment of coatomer proteins to the Golgi membrane. The hydrolysis of ARF1-bound GTP, which is mediated by ARFGAPs proteins, is required for dissociation of coat proteins from Golgi membranes and vesicles. This Caenorhabditis elegans protein is ADP-ribosylation factor 1-like 1 (arf-1.1).